A 357-amino-acid chain; its full sequence is UDP-N-acetylglucosamine--N-acetylmuramyl-(pentapeptide) pyrophosphoryl-undecaprenol N-acetylglucosamine transferase (357 aa).

Residues Thr15–Gly17, Asn124, Arg165, Ser191, and Gln285 each bind UDP-N-acetyl-alpha-D-glucosamine.

Belongs to the glycosyltransferase 28 family. MurG subfamily.

It localises to the cell inner membrane. The enzyme catalyses di-trans,octa-cis-undecaprenyl diphospho-N-acetyl-alpha-D-muramoyl-L-alanyl-D-glutamyl-meso-2,6-diaminopimeloyl-D-alanyl-D-alanine + UDP-N-acetyl-alpha-D-glucosamine = di-trans,octa-cis-undecaprenyl diphospho-[N-acetyl-alpha-D-glucosaminyl-(1-&gt;4)]-N-acetyl-alpha-D-muramoyl-L-alanyl-D-glutamyl-meso-2,6-diaminopimeloyl-D-alanyl-D-alanine + UDP + H(+). The protein operates within cell wall biogenesis; peptidoglycan biosynthesis. Its function is as follows. Cell wall formation. Catalyzes the transfer of a GlcNAc subunit on undecaprenyl-pyrophosphoryl-MurNAc-pentapeptide (lipid intermediate I) to form undecaprenyl-pyrophosphoryl-MurNAc-(pentapeptide)GlcNAc (lipid intermediate II). The polypeptide is UDP-N-acetylglucosamine--N-acetylmuramyl-(pentapeptide) pyrophosphoryl-undecaprenol N-acetylglucosamine transferase (Microcystis aeruginosa (strain NIES-843 / IAM M-2473)).